The chain runs to 197 residues: dCTP deaminase (197 aa).

DCTP contacts are provided by residues 110 to 115, Asp-128, 136 to 138, Tyr-171, and Gln-182; these read RSSLAR and VLE. Residue Glu-138 is the Proton donor/acceptor of the active site.

The protein belongs to the dCTP deaminase family. Homotrimer.

The catalysed reaction is dCTP + H2O + H(+) = dUTP + NH4(+). The protein operates within pyrimidine metabolism; dUMP biosynthesis; dUMP from dCTP (dUTP route): step 1/2. Catalyzes the deamination of dCTP to dUTP. The sequence is that of dCTP deaminase from Alteromonas mediterranea (strain DSM 17117 / CIP 110805 / LMG 28347 / Deep ecotype).